The primary structure comprises 700 residues: Autophagy-related protein 13 (700 aa).

Positions 319–352 are disordered; it reads GSINSSSSPPPGATQSNQSVSSFSTSKPIPVTLN. The span at 332-344 shows a compositional bias: low complexity; the sequence is TQSNQSVSSFSTS. The segment at 399 to 407 is ATG17-binding; that stretch reads SSFGSRFRT. An ATG1-binding region spans residues 428–487; it reads TPNNPILHNFRSRNKSPSVSSTELGPSSSIYMDDDLDSFMKMLDSKPDLRFPSNSPSVYE. Residues 506-532 are compositionally biased toward polar residues; it reads EQQQHGSPSSNQIMIHSQSQTSQSQVF. 3 disordered regions span residues 506-562, 576-637, and 649-700; these read EQQQ…PGVS, HASS…NPEL, and ESDD…NQEF. The span at 595 to 631 shows a compositional bias: low complexity; the sequence is SSPPASATAVATVHNSLRRLTSSSQRTNTNSTNSSTR. The span at 656–667 shows a compositional bias: basic and acidic residues; the sequence is DEHSPRSTDTKS.

Belongs to the ATG13 family. Fungi subfamily. As to quaternary structure, hypophosphorylated form interacts with ATG1 to form the ATG1-ATG13 kinase complex. The ATG1-ATG13 complex interacts with the ATG17-ATG29-ATG31 complex through direct interaction with ATG17. Interacts with VAC8.

The protein resides in the cytoplasm. Its subcellular location is the preautophagosomal structure. Its function is as follows. Activates the ATG1 kinase in a nutritional condition dependent manner through the TOR pathway, leading to autophagy. Involved in ATG9 and ATG23 cycling through the pre-autophagosomal structure. Also involved in cytoplasm to vacuole transport (Cvt) and more specifically in Cvt vesicle formation. Seems to play a role in the switching machinery regulating the conversion between the Cvt pathway and autophagy. Finally, ATG13 is also required for glycogen storage during stationary phase. Acts as a negative regulator of xylose alcoholic fermentation, a role that is not related to autophagy. This is Autophagy-related protein 13 from Ogataea parapolymorpha (strain ATCC 26012 / BCRC 20466 / JCM 22074 / NRRL Y-7560 / DL-1) (Yeast).